The following is a 463-amino-acid chain: GTPase Der (463 aa).

2 EngA-type G domains span residues 3–166 and 177–350; these read PVVA…PESG and IRIA…QSAM. GTP is bound by residues 9 to 16, 56 to 60, 118 to 121, 183 to 190, 230 to 234, and 295 to 298; these read GRTNVGKS, DTGGI, NKID, GRPNVGKS, DTAGI, and NKWD. Residues 351–435 form the KH-like domain; sequence LDLSASRLTQ…PLKLVFKSAE (85 aa).

Belongs to the TRAFAC class TrmE-Era-EngA-EngB-Septin-like GTPase superfamily. EngA (Der) GTPase family. As to quaternary structure, associates with the 50S ribosomal subunit.

In terms of biological role, GTPase that plays an essential role in the late steps of ribosome biogenesis. This is GTPase Der from Methylococcus capsulatus (strain ATCC 33009 / NCIMB 11132 / Bath).